A 1508-amino-acid polypeptide reads, in one-letter code: DNA-directed RNA polymerase subunit beta' (1508 aa).

Zn(2+)-binding residues include cysteine 71, cysteine 73, cysteine 86, and cysteine 89. Aspartate 470, aspartate 472, and aspartate 474 together coordinate Mg(2+). Zn(2+)-binding residues include cysteine 804, cysteine 878, cysteine 885, and cysteine 888.

It belongs to the RNA polymerase beta' chain family. As to quaternary structure, the RNAP catalytic core consists of 2 alpha, 1 beta, 1 beta' and 1 omega subunit. When a sigma factor is associated with the core the holoenzyme is formed, which can initiate transcription. The cofactor is Mg(2+). Requires Zn(2+) as cofactor.

The enzyme catalyses RNA(n) + a ribonucleoside 5'-triphosphate = RNA(n+1) + diphosphate. DNA-dependent RNA polymerase catalyzes the transcription of DNA into RNA using the four ribonucleoside triphosphates as substrates. This is DNA-directed RNA polymerase subunit beta' from Campylobacter fetus subsp. fetus (strain 82-40).